We begin with the raw amino-acid sequence, 127 residues long: Small ribosomal subunit protein eS8 (127 aa).

It belongs to the eukaryotic ribosomal protein eS8 family. In terms of assembly, part of the 30S ribosomal subunit.

This Pyrococcus abyssi (strain GE5 / Orsay) protein is Small ribosomal subunit protein eS8 (rps8e).